We begin with the raw amino-acid sequence, 373 residues long: Geraniol dehydrogenase (373 aa).

Zn(2+) is bound by residues cysteine 47, histidine 67, cysteine 96, cysteine 99, cysteine 102, cysteine 110, and cysteine 175.

The protein belongs to the zinc-containing alcohol dehydrogenase family. As to quaternary structure, homodimer. It depends on Zn(2+) as a cofactor.

It catalyses the reaction (2E)-geraniol + NAD(+) = (2E)-geranial + NADH + H(+). The enzyme catalyses perillyl alcohol + NAD(+) = perillyl aldehyde + NADH + H(+). It functions in the pathway terpene metabolism; monoterpene degradation. With respect to regulation, is inhibited by EDTA, N-ethylmaleimide, diethylpyrocarbonate, and 1-cyclohexyl-N-(2-morpholinoethyl)carbodiimide in vitro. In terms of biological role, involved in the degradation of the monoterpenes beta-myrcene and limonene. During anaerobic degradation of beta-myrcene, catalyzes the NAD(+)-dependent oxidation of geraniol to geranial. Can also catalyze the oxidation of (S)-perillyl alcohol to perillyl aldehyde, and to a lesser extent, the oxidation of nerol, citronellol, cumic alcohol, and benzyl alcohol. Cannot use NADP(+) instead of NAD(+) as cosubstrate. The chain is Geraniol dehydrogenase from Castellaniella defragrans (strain DSM 12143 / CCUG 39792 / 65Phen) (Alcaligenes defragrans).